The sequence spans 493 residues: E3 ubiquitin-protein ligase TRIM35 (493 aa).

N-acetylmethionine is present on M1. 2 positions are modified to phosphoserine: S4 and S8. The segment at C21 to K61 adopts an RING-type zinc-finger fold. Residues R96–V137 form a B box-type zinc finger. Positions 101, 104, 123, and 129 each coordinate Zn(2+). Positions A210–S251 form a coiled coil. One can recognise a B30.2/SPRY domain in the interval L284–V487.

This sequence belongs to the TRIM/RBCC family. In terms of assembly, interacts with PKM isoform M2, but not isoform M1; this interaction may compete with that between PKM and FGFR1, and hence reduces FGFR1-dependent tyrosine phosphorylation of PKM. Interacts with IRF7; this interaction promotes IRF7 proteasomal degradation. Interacts with TRAF3; this interaction promotes TRAF3 activation.

Its subcellular location is the cytoplasm. It is found in the nucleus. It catalyses the reaction S-ubiquitinyl-[E2 ubiquitin-conjugating enzyme]-L-cysteine + [acceptor protein]-L-lysine = [E2 ubiquitin-conjugating enzyme]-L-cysteine + N(6)-ubiquitinyl-[acceptor protein]-L-lysine.. The protein operates within protein modification; protein ubiquitination. Functionally, E3 ubiquitin-protein ligase that participates in multiple biological processes including cell death, glucose metabolism, and in particular, the innate immune response. Mediates 'Lys-63'-linked polyubiquitination of TRAF3 thereby promoting type I interferon production via RIG-I signaling pathway. Can also catalyze 'Lys-48'-linked polyubiquitination and proteasomal degradation of viral proteins such as influenza virus PB2. Acts as a negative feedback regulator of TLR7- and TLR9-triggered signaling. Mechanistically, promotes the 'Lys-48'-linked ubiquitination of IRF7 and induces its degradation via a proteasome-dependent pathway. Reduces FGFR1-dependent tyrosine phosphorylation of PKM, inhibiting PKM-dependent lactate production, glucose metabolism, and cell growth. This Homo sapiens (Human) protein is E3 ubiquitin-protein ligase TRIM35 (TRIM35).